Here is a 644-residue protein sequence, read N- to C-terminus: Threonine--tRNA ligase (644 aa).

Residues 8–70 (VKAMVITLRD…EEDGELEILT (63 aa)) form the TGS domain. Residues 251–541 (DHRKLGKELD…LTEHFAGAFP (291 aa)) are catalytic. Zn(2+) is bound by residues Cys-342, His-393, and His-518.

It belongs to the class-II aminoacyl-tRNA synthetase family. In terms of assembly, homodimer. Zn(2+) is required as a cofactor.

The protein localises to the cytoplasm. The catalysed reaction is tRNA(Thr) + L-threonine + ATP = L-threonyl-tRNA(Thr) + AMP + diphosphate + H(+). Its function is as follows. Catalyzes the attachment of threonine to tRNA(Thr) in a two-step reaction: L-threonine is first activated by ATP to form Thr-AMP and then transferred to the acceptor end of tRNA(Thr). Also edits incorrectly charged L-seryl-tRNA(Thr). This is Threonine--tRNA ligase from Caldanaerobacter subterraneus subsp. tengcongensis (strain DSM 15242 / JCM 11007 / NBRC 100824 / MB4) (Thermoanaerobacter tengcongensis).